Reading from the N-terminus, the 77-residue chain is UPF0346 protein lin1971 (77 aa).

This sequence belongs to the UPF0346 family.

The sequence is that of UPF0346 protein lin1971 from Listeria innocua serovar 6a (strain ATCC BAA-680 / CLIP 11262).